The chain runs to 188 residues: MVSISNVSRGAIIRWNGAPHSIESLVHRTPGNLRAFYQASMKNLKTGRNVEYRFSATEQVDVIVTERKKYQYLYRDGEDYVMMDTETFDQINVPEVAIGPASRFLKDSVMVDIVFADDGSILEVELPTFVELEVTETSPASKDDRATSGTKPAIVETGAEVNVPMFIQTGSIIRIDTRSGEYMERVKK.

It belongs to the elongation factor P family.

It is found in the cytoplasm. Its pathway is protein biosynthesis; polypeptide chain elongation. Involved in peptide bond synthesis. Stimulates efficient translation and peptide-bond synthesis on native or reconstituted 70S ribosomes in vitro. Probably functions indirectly by altering the affinity of the ribosome for aminoacyl-tRNA, thus increasing their reactivity as acceptors for peptidyl transferase. In Chlorobaculum tepidum (strain ATCC 49652 / DSM 12025 / NBRC 103806 / TLS) (Chlorobium tepidum), this protein is Elongation factor P.